The chain runs to 346 residues: MVVKVGVIGTGAMGRAHIDRLTNVLTGAEVVAVTDIDHEAAEAAVRDFHLNAKVYPDDTSLLQDPDIDAVFVVSFGGAHEATVLKALDTDKFIFTEKPLATTLEGAKRIVDKELTKSKKVIQVGFMRRYDQGIRALKEKLDTGIIGAPLVVRASHINPNVASNYSNEMAITDTLIHEIDEMHWLLDDEYTSIQITYPRQSAEVRNEGLHDPQLATLTTKKGTVIQVLVHVTAQYGYEVKLEVIGETGELQLPNYGLGPILRSNANQQTAVEMSWINRFIQAYNTEVQEFIDQVAKSEPPVGPSAWDGYIAAITAAAANRSQKDQETVLINVAGTPTFYQNKNAIHA.

The protein belongs to the Gfo/Idh/MocA family. As to quaternary structure, homotetramer.

It catalyses the reaction myo-inositol + NAD(+) = scyllo-inosose + NADH + H(+). The enzyme catalyses 1D-chiro-inositol + NAD(+) = scyllo-inosine + NADH + H(+). The protein operates within polyol metabolism; myo-inositol degradation into acetyl-CoA; acetyl-CoA from myo-inositol: step 1/7. In terms of biological role, involved in the oxidation of myo-inositol (MI) and D-chiro-inositol (DCI) to 2-keto-myo-inositol (2KMI or 2-inosose) and 1-keto-D-chiro-inositol (1KDCI), respectively. The polypeptide is Inositol 2-dehydrogenase/D-chiro-inositol 3-dehydrogenase (Lacticaseibacillus casei (Lactobacillus casei)).